Reading from the N-terminus, the 207-residue chain is Large ribosomal subunit protein bL25 (207 aa).

Residues 171 to 207 (ESVVTVEVPEDATESTTAPEAAAAPADAAAAPAADAK) form a disordered region. Residues 184–207 (ESTTAPEAAAAPADAAAAPAADAK) are compositionally biased toward low complexity.

This sequence belongs to the bacterial ribosomal protein bL25 family. CTC subfamily. As to quaternary structure, part of the 50S ribosomal subunit; part of the 5S rRNA/L5/L18/L25 subcomplex. Contacts the 5S rRNA. Binds to the 5S rRNA independently of L5 and L18.

Functionally, this is one of the proteins that binds to the 5S RNA in the ribosome where it forms part of the central protuberance. In Bifidobacterium longum subsp. infantis (strain ATCC 15697 / DSM 20088 / JCM 1222 / NCTC 11817 / S12), this protein is Large ribosomal subunit protein bL25.